The sequence spans 425 residues: RNA-binding protein L (425 aa).

Residues 1-20 (MQQPPSQPQPGMGGPPPPPQ) are compositionally biased toward pro residues. The segment at 1-82 (MQQPPSQPQP…AAPPPQAMPA (82 aa)) is disordered. A compositionally biased stretch (low complexity) spans 21 to 31 (GAAGQPPQWGA). A compositionally biased stretch (pro residues) spans 32–80 (IPPPMPPHQYGAPPPQQPPAMWGQPPPQAHYGQVPPPQPYYAAPPPQAM). RRM domains lie at 90-170 (KTLW…WASA), 180-259 (YTIF…PAAN), and 284-356 (TTIF…WGRS).

It belongs to the polyadenylate-binding RBP45 family. As to quaternary structure, interacts with RBP-P. Interacts with RAB5A.

Its subcellular location is the nucleus. It localises to the cytoplasm. Its function is as follows. RNA-binding protein that binds to a cis-localization element or zipcode, within the 5'-CDS of prolamine RNA. Binds strongly to glutelin and prolamin mRNAs, particularly to 3'-UTR and zipcode RNA. Recognizes and binds to glutelin zipcode RNA, which is required for proper mRNA localization to cisternal endoplasmic reticulum. Recognizes and binds to prolamin zipcode RNA, which is required for proper mRNA localization to the protein body endoplasmic reticulum that delimits the prolamine intracisternal inclusion granules. Required for the correct localization of glutelin and prolamine mRNA in endosperm cells during grain development. RBP-L and RBP-P form a quaternary complex with the membrane trafficking factors NSF and RAB5A. This quaternay complex carries glutelin mRNAs for active transport on endosomes to the cortical endoplasmic reticulum membrane, and enables endosome-mediated glutelin mRNA transport in endosperm cells. The sequence is that of RNA-binding protein L from Oryza sativa subsp. japonica (Rice).